A 94-amino-acid chain; its full sequence is Large ribosomal subunit protein bL25 (94 aa).

This sequence belongs to the bacterial ribosomal protein bL25 family. As to quaternary structure, part of the 50S ribosomal subunit; part of the 5S rRNA/L5/L18/L25 subcomplex. Contacts the 5S rRNA. Binds to the 5S rRNA independently of L5 and L18.

This is one of the proteins that binds to the 5S RNA in the ribosome where it forms part of the central protuberance. This Klebsiella pneumoniae subsp. pneumoniae (strain ATCC 700721 / MGH 78578) protein is Large ribosomal subunit protein bL25.